The chain runs to 60 residues: Cytotoxin 2 (60 aa).

Intrachain disulfides connect Cys3-Cys21, Cys14-Cys38, Cys42-Cys53, and Cys54-Cys59.

Belongs to the three-finger toxin family. Short-chain subfamily. Type IA cytotoxin sub-subfamily. In terms of assembly, monomer in solution; Homodimer and oligomer in the presence of negatively charged lipids forming a pore with a size ranging between 20 and 30 Angstroms. In terms of tissue distribution, expressed by the venom gland.

The protein localises to the secreted. It is found in the target cell membrane. In terms of biological role, shows cytolytic activity on many different cells by forming pore in lipid membranes. In vivo, increases heart rate or kills the animal by cardiac arrest. In addition, it binds to heparin with high affinity, interacts with Kv channel-interacting protein 1 (KCNIP1) in a calcium-independent manner, and binds to integrin alpha-V/beta-3 (ITGAV/ITGB3) with moderate affinity. The chain is Cytotoxin 2 from Naja nivea (Cape cobra).